The primary structure comprises 460 residues: UDP-N-acetylmuramoylalanine--D-glutamate ligase (460 aa).

Residue 115–121 (GTNGKTT) participates in ATP binding.

Belongs to the MurCDEF family.

The protein localises to the cytoplasm. It carries out the reaction UDP-N-acetyl-alpha-D-muramoyl-L-alanine + D-glutamate + ATP = UDP-N-acetyl-alpha-D-muramoyl-L-alanyl-D-glutamate + ADP + phosphate + H(+). It functions in the pathway cell wall biogenesis; peptidoglycan biosynthesis. Its function is as follows. Cell wall formation. Catalyzes the addition of glutamate to the nucleotide precursor UDP-N-acetylmuramoyl-L-alanine (UMA). The chain is UDP-N-acetylmuramoylalanine--D-glutamate ligase from Salinibacter ruber (strain DSM 13855 / M31).